A 425-amino-acid chain; its full sequence is MGMSTAVASPVALDSGKLEPLRVMVVDDSVVIRGLISRWIEAEPDMMVAASLRTGRDAVSQVERADPDVVVLDIEMPELDGISALPQLLAKKRNLIVIMASTLTRRNAEISFKALSLGASDYIPKPESTREVAAADIFRHDLMQKIRHLAAKRRRPATVASPPPDHDDYGSNASTIMNAVDSNISERDAGGKPRRTFPHPALVQREQQPRSAQAARAMSRPQPTLRSFSAHLPRALLIGSSTGGPQALMTLVAGIGPVIDRCPVLITQHMPPTFTTILAEHLARAAGRPAHEGVDQEIVKQGHIYLAPGGRHMRVARKGADAVIVLDNGPAVNFCKPAVDPLFMSAIDVWQGGALAVILTGMGSDGMRGGTQIVAAGGSIIAQDEASSVVWGMPGAAVQAGICAAVLPLQQIAPKLVRLFAGDGL.

One can recognise a Response regulatory domain in the interval 22–140; sequence RVMVVDDSVV…EVAAADIFRH (119 aa). Asp73 is subject to 4-aspartylphosphate. Disordered stretches follow at residues 150–174 and 203–223; these read AAKRRRPATVASPPPDHDDYGSNAS and VQREQQPRSAQAARAMSRPQP. The CheB-type methylesterase domain occupies 221–417; it reads PQPTLRSFSA…PLQQIAPKLV (197 aa). Catalysis depends on residues Ser241, His269, and Asp365.

Belongs to the CheB family. Phosphorylated by CheA. Phosphorylation of the N-terminal regulatory domain activates the methylesterase activity.

It localises to the cytoplasm. The enzyme catalyses [protein]-L-glutamate 5-O-methyl ester + H2O = L-glutamyl-[protein] + methanol + H(+). It carries out the reaction L-glutaminyl-[protein] + H2O = L-glutamyl-[protein] + NH4(+). In terms of biological role, involved in chemotaxis. Part of a chemotaxis signal transduction system that modulates chemotaxis in response to various stimuli. Catalyzes the demethylation of specific methylglutamate residues introduced into the chemoreceptors (methyl-accepting chemotaxis proteins or MCP) by CheR. Also mediates the irreversible deamidation of specific glutamine residues to glutamic acid. This chain is Protein-glutamate methylesterase/protein-glutamine glutaminase, found in Nitrobacter winogradskyi (strain ATCC 25391 / DSM 10237 / CIP 104748 / NCIMB 11846 / Nb-255).